Reading from the N-terminus, the 132-residue chain is Small ribosomal subunit protein uS8 (132 aa).

It belongs to the universal ribosomal protein uS8 family. As to quaternary structure, part of the 30S ribosomal subunit. Contacts proteins S5 and S12.

One of the primary rRNA binding proteins, it binds directly to 16S rRNA central domain where it helps coordinate assembly of the platform of the 30S subunit. In Staphylococcus haemolyticus (strain JCSC1435), this protein is Small ribosomal subunit protein uS8.